The sequence spans 209 residues: Ribosomal RNA small subunit methyltransferase G (209 aa).

S-adenosyl-L-methionine-binding positions include glycine 71, phenylalanine 76, alanine 122 to glutamate 123, and arginine 135.

The protein belongs to the methyltransferase superfamily. RNA methyltransferase RsmG family.

The protein resides in the cytoplasm. In terms of biological role, specifically methylates the N7 position of a guanine in 16S rRNA. This is Ribosomal RNA small subunit methyltransferase G from Flavobacterium johnsoniae (strain ATCC 17061 / DSM 2064 / JCM 8514 / BCRC 14874 / CCUG 350202 / NBRC 14942 / NCIMB 11054 / UW101) (Cytophaga johnsonae).